The chain runs to 556 residues: Glutamine--tRNA ligase (556 aa).

Positions 34–44 match the 'HIGH' region motif; that stretch reads PEPNGYLHIGH. Residues 35 to 37 and 41 to 47 contribute to the ATP site; these read EPN and HIGHAKS. 2 residues coordinate L-glutamine: Asp-67 and Tyr-212. Residues Thr-231, 261–262, and 269–271 each bind ATP; these read RL and MSK. A 'KMSKS' region motif is present at residues 268 to 272; the sequence is VMSKR.

This sequence belongs to the class-I aminoacyl-tRNA synthetase family. In terms of assembly, monomer.

It localises to the cytoplasm. The catalysed reaction is tRNA(Gln) + L-glutamine + ATP = L-glutaminyl-tRNA(Gln) + AMP + diphosphate. The sequence is that of Glutamine--tRNA ligase from Vibrio vulnificus (strain YJ016).